The sequence spans 492 residues: Stromelysin-3 (492 aa).

A signal peptide spans 1 to 35; that stretch reads MARAACLLRAISRVLLLPLPLLLLLLLLLPSPLMA. A propeptide spans 36–101 (activation peptide); sequence RARPPESHRH…VLNARNRQKR (66 aa). The short motif at 82-89 is the Cysteine switch element; sequence LRCGVPDL. Zn(2+) is bound by residues C84, H168, and D170. Ca(2+)-binding residues include D175, G176, G178, and I180. Residues H183, H196, and H219 each coordinate Zn(2+). E220 is an active-site residue. The Zn(2+) site is built by H223 and H229. Hemopexin repeat units lie at residues 295–343, 344–386, 388–436, and 437–484; these read PDVC…WQGL, PSPV…KLGL, GSPV…WRGV, and PSEI…FFDC. The cysteines at positions 298 and 484 are disulfide-linked.

This sequence belongs to the peptidase M10A family. Ca(2+) is required as a cofactor. Zn(2+) serves as cofactor. In terms of processing, the precursor is cleaved by a furin endopeptidase. As to expression, specifically expressed in the mammary gland during apoptosis.

It localises to the secreted. The protein localises to the extracellular space. The protein resides in the extracellular matrix. Functionally, may play an important role in the progression of epithelial malignancies. The chain is Stromelysin-3 (Mmp11) from Mus musculus (Mouse).